The following is a 554-amino-acid chain: CTP synthase (554 aa).

An amidoligase domain region spans residues 1 to 279 (MSQPRAEHVT…DAFLIRRLDL (279 aa)). Ser21 provides a ligand contact to CTP. Ser21 is a binding site for UTP. Residues 22 to 27 (SLGKGL) and Asp79 each bind ATP. Mg(2+) contacts are provided by Asp79 and Glu153. Residues 160-162 (DIE), 200-205 (KTKPTQ), and Lys236 contribute to the CTP site. UTP is bound by residues 200–205 (KTKPTQ) and Lys236. The region spanning 304 to 551 (TVALVGKYID…VKAGLKHKND (248 aa)) is the Glutamine amidotransferase type-1 domain. Gly367 serves as a coordination point for L-glutamine. The Nucleophile; for glutamine hydrolysis role is filled by Cys394. Residues 395–398 (LGLQ), Glu417, and Arg478 each bind L-glutamine. Catalysis depends on residues His524 and Glu526.

It belongs to the CTP synthase family. In terms of assembly, homotetramer.

It carries out the reaction UTP + L-glutamine + ATP + H2O = CTP + L-glutamate + ADP + phosphate + 2 H(+). The catalysed reaction is L-glutamine + H2O = L-glutamate + NH4(+). The enzyme catalyses UTP + NH4(+) + ATP = CTP + ADP + phosphate + 2 H(+). Its pathway is pyrimidine metabolism; CTP biosynthesis via de novo pathway; CTP from UDP: step 2/2. Allosterically activated by GTP, when glutamine is the substrate; GTP has no effect on the reaction when ammonia is the substrate. The allosteric effector GTP functions by stabilizing the protein conformation that binds the tetrahedral intermediate(s) formed during glutamine hydrolysis. Inhibited by the product CTP, via allosteric rather than competitive inhibition. Its function is as follows. Catalyzes the ATP-dependent amination of UTP to CTP with either L-glutamine or ammonia as the source of nitrogen. Regulates intracellular CTP levels through interactions with the four ribonucleotide triphosphates. This chain is CTP synthase, found in Corynebacterium kroppenstedtii (strain DSM 44385 / JCM 11950 / CIP 105744 / CCUG 35717).